A 71-amino-acid polypeptide reads, in one-letter code: MSQTLQQTGLFDDEHADIGALFDHLDQIPSVELEKRWPSLLVEVIEVMQAEYCAKILQKIKQKRPLRSSWA.

This is an uncharacterized protein from Haemophilus influenzae (strain ATCC 51907 / DSM 11121 / KW20 / Rd).